A 262-amino-acid polypeptide reads, in one-letter code: Ribosome maturation factor RimP (262 aa).

The segment at 197 to 262 is disordered; that stretch reads RELGVLPPPP…LGQTDPTEGD (66 aa). Positions 223–233 are enriched in basic residues; that stretch reads KLPKAKLKAAK. The span at 240-254 shows a compositional bias: basic and acidic residues; sequence TKEHRLAAAERKRLG.

Belongs to the RimP family.

The protein resides in the cytoplasm. In terms of biological role, required for maturation of 30S ribosomal subunits. The protein is Ribosome maturation factor RimP of Rhodopseudomonas palustris (strain BisB18).